Here is a 432-residue protein sequence, read N- to C-terminus: Adenylosuccinate synthetase (432 aa).

Residues 13–19 (GDEGKGK) and 41–43 (GHT) contribute to the GTP site. Residue Asp-14 is the Proton acceptor of the active site. Mg(2+) is bound by residues Asp-14 and Gly-41. IMP-binding positions include 14–17 (DEGK), 39–42 (NAGH), Thr-130, Arg-144, Gln-225, Thr-240, and Arg-304. The Proton donor role is filled by His-42. 300-306 (ATTGRRR) is a substrate binding site. Residues Arg-306, 332 to 334 (KLD), and 415 to 417 (STG) each bind GTP.

The protein belongs to the adenylosuccinate synthetase family. As to quaternary structure, homodimer. Mg(2+) serves as cofactor.

The protein localises to the cytoplasm. It catalyses the reaction IMP + L-aspartate + GTP = N(6)-(1,2-dicarboxyethyl)-AMP + GDP + phosphate + 2 H(+). It functions in the pathway purine metabolism; AMP biosynthesis via de novo pathway; AMP from IMP: step 1/2. Its function is as follows. Plays an important role in the de novo pathway of purine nucleotide biosynthesis. Catalyzes the first committed step in the biosynthesis of AMP from IMP. The sequence is that of Adenylosuccinate synthetase from Enterobacter sp. (strain 638).